We begin with the raw amino-acid sequence, 158 residues long: Ribonuclease H (158 aa).

One can recognise an RNase H type-1 domain in the interval Ala9–Gln155. Positions 18, 58, 80, and 147 each coordinate Mg(2+).

This sequence belongs to the RNase H family. Monomer. Mg(2+) serves as cofactor.

The protein resides in the cytoplasm. The catalysed reaction is Endonucleolytic cleavage to 5'-phosphomonoester.. Endonuclease that specifically degrades the RNA of RNA-DNA hybrids. In Rhodopirellula baltica (strain DSM 10527 / NCIMB 13988 / SH1), this protein is Ribonuclease H.